We begin with the raw amino-acid sequence, 89 residues long: MSFQLTLFSMLFLLIAVVVGQPIQSQNGDLKMQAVQDNSPLNMEAFNDDSALYDYLEQSDPSLKSMEKRWANQVRFGKRASWASSVRFG.

An N-terminal signal peptide occupies residues 1 to 20; that stretch reads MSFQLTLFSMLFLLIAVVVG. The propeptide occupies 21–67; the sequence is QPIQSQNGDLKMQAVQDNSPLNMEAFNDDSALYDYLEQSDPSLKSME. Phe-76 carries the post-translational modification Phenylalanine amide. The propeptide occupies 80–89; it reads ASWASSVRFG.

This sequence belongs to the FARP (FMRFamide related peptide) family. Each flp gene is expressed in a distinct set of neurons. Flp-19 is expressed in the URX interneurons, the serotonin and acetylcholine-expressing HSN neurons, and the AIN, AWA and BAG neurons.

It localises to the secreted. FMRFamides and FMRFamide-like peptides are neuropeptides. WANQVRF-amide inhibits the activity of dissected pharyngeal myogenic muscle system. The polypeptide is FMRFamide-like neuropeptides 19 (Caenorhabditis elegans).